We begin with the raw amino-acid sequence, 673 residues long: Translation factor GUF1 homolog, mitochondrial (673 aa).

Residues 68-260 (ERIRNFSIIA…AVIERIPSPP (193 aa)) form the tr-type G domain. GTP contacts are provided by residues 77 to 84 (AHVDHGKS), 153 to 157 (DTPGH), and 207 to 210 (NKID).

This sequence belongs to the TRAFAC class translation factor GTPase superfamily. Classic translation factor GTPase family. LepA subfamily.

It is found in the mitochondrion inner membrane. The enzyme catalyses GTP + H2O = GDP + phosphate + H(+). Functionally, promotes mitochondrial protein synthesis. May act as a fidelity factor of the translation reaction, by catalyzing a one-codon backward translocation of tRNAs on improperly translocated ribosomes. Binds to mitochondrial ribosomes in a GTP-dependent manner. The chain is Translation factor GUF1 homolog, mitochondrial from Ricinus communis (Castor bean).